Consider the following 364-residue polypeptide: NAD(P)H-quinone oxidoreductase subunit 1, chloroplastic (364 aa).

The next 6 membrane-spanning stretches (helical) occupy residues 27-47 (IWLL…VLVI), 98-118 (FSVG…VIPF), 127-147 (ISIG…GLLM), 255-275 (GLFY…VTVL), 301-321 (VFGS…FLFV), and 337-357 (LLNL…LLTT).

This sequence belongs to the complex I subunit 1 family. In terms of assembly, NDH is composed of at least 16 different subunits, 5 of which are encoded in the nucleus.

The protein localises to the plastid. It is found in the chloroplast thylakoid membrane. The enzyme catalyses a plastoquinone + NADH + (n+1) H(+)(in) = a plastoquinol + NAD(+) + n H(+)(out). It catalyses the reaction a plastoquinone + NADPH + (n+1) H(+)(in) = a plastoquinol + NADP(+) + n H(+)(out). Functionally, NDH shuttles electrons from NAD(P)H:plastoquinone, via FMN and iron-sulfur (Fe-S) centers, to quinones in the photosynthetic chain and possibly in a chloroplast respiratory chain. The immediate electron acceptor for the enzyme in this species is believed to be plastoquinone. Couples the redox reaction to proton translocation, and thus conserves the redox energy in a proton gradient. In Illicium oligandrum (Star anise), this protein is NAD(P)H-quinone oxidoreductase subunit 1, chloroplastic.